The primary structure comprises 459 residues: Cysteine--tRNA ligase (459 aa).

Residue Cys-28 participates in Zn(2+) binding. The 'HIGH' region motif lies at 30 to 40; it reads VTVYDLCHFGH. The Zn(2+) site is built by Cys-209, His-234, and Glu-238. The 'KMSKS' region signature appears at 266–270; the sequence is KMSKS. Lys-269 lines the ATP pocket.

The protein belongs to the class-I aminoacyl-tRNA synthetase family. Monomer. Requires Zn(2+) as cofactor.

Its subcellular location is the cytoplasm. The enzyme catalyses tRNA(Cys) + L-cysteine + ATP = L-cysteinyl-tRNA(Cys) + AMP + diphosphate. In Glaesserella parasuis serovar 5 (strain SH0165) (Haemophilus parasuis), this protein is Cysteine--tRNA ligase.